The sequence spans 1012 residues: Probable inorganic carbon transporter subunit DabA (1012 aa).

Zn(2+) contacts are provided by Cys-489, Asp-491, His-679, and Cys-694.

This sequence belongs to the inorganic carbon transporter (TC 9.A.2) DabA family. Forms a complex with DabB. It depends on Zn(2+) as a cofactor.

The protein resides in the cell inner membrane. Functionally, part of an energy-coupled inorganic carbon pump. The sequence is that of Probable inorganic carbon transporter subunit DabA from Dechloromonas aromatica (strain RCB).